The following is a 189-amino-acid chain: Peptidyl-tRNA hydrolase (189 aa).

Histidine 14 contacts tRNA. The Proton acceptor role is filled by histidine 19. Positions 64, 66, and 112 each coordinate tRNA.

It belongs to the PTH family. As to quaternary structure, monomer.

The protein resides in the cytoplasm. The enzyme catalyses an N-acyl-L-alpha-aminoacyl-tRNA + H2O = an N-acyl-L-amino acid + a tRNA + H(+). Hydrolyzes ribosome-free peptidyl-tRNAs (with 1 or more amino acids incorporated), which drop off the ribosome during protein synthesis, or as a result of ribosome stalling. Its function is as follows. Catalyzes the release of premature peptidyl moieties from peptidyl-tRNA molecules trapped in stalled 50S ribosomal subunits, and thus maintains levels of free tRNAs and 50S ribosomes. The polypeptide is Peptidyl-tRNA hydrolase (Chlorobium phaeobacteroides (strain BS1)).